Reading from the N-terminus, the 376-residue chain is Chaperone protein DnaJ (376 aa).

The J domain occupies 5–70 (DYYEVLGVGR…DKKAAYDQFG (66 aa)). Residues 132-210 (GLTKELKVPT…CHGNGRVEKT (79 aa)) form a CR-type zinc finger. Zn(2+)-binding residues include Cys-145, Cys-148, Cys-162, Cys-165, Cys-184, Cys-187, Cys-198, and Cys-201. 4 CXXCXGXG motif repeats span residues 145–152 (CDSCDGSG), 162–169 (CGTCHGMG), 184–191 (CPTCHGRG), and 198–205 (CSKCHGNG).

Belongs to the DnaJ family. In terms of assembly, homodimer. Zn(2+) is required as a cofactor.

The protein resides in the cytoplasm. Participates actively in the response to hyperosmotic and heat shock by preventing the aggregation of stress-denatured proteins and by disaggregating proteins, also in an autonomous, DnaK-independent fashion. Unfolded proteins bind initially to DnaJ; upon interaction with the DnaJ-bound protein, DnaK hydrolyzes its bound ATP, resulting in the formation of a stable complex. GrpE releases ADP from DnaK; ATP binding to DnaK triggers the release of the substrate protein, thus completing the reaction cycle. Several rounds of ATP-dependent interactions between DnaJ, DnaK and GrpE are required for fully efficient folding. Also involved, together with DnaK and GrpE, in the DNA replication of plasmids through activation of initiation proteins. In Shewanella amazonensis (strain ATCC BAA-1098 / SB2B), this protein is Chaperone protein DnaJ.